The sequence spans 271 residues: 3-methyl-2-oxobutanoate hydroxymethyltransferase (271 aa).

Mg(2+) contacts are provided by Asp49 and Asp88. 3-methyl-2-oxobutanoate-binding positions include 49-50 (DS), Asp88, and Lys118. Position 120 (Glu120) interacts with Mg(2+). Glu187 serves as the catalytic Proton acceptor.

Belongs to the PanB family. As to quaternary structure, homodecamer; pentamer of dimers. It depends on Mg(2+) as a cofactor.

It localises to the cytoplasm. The catalysed reaction is 3-methyl-2-oxobutanoate + (6R)-5,10-methylene-5,6,7,8-tetrahydrofolate + H2O = 2-dehydropantoate + (6S)-5,6,7,8-tetrahydrofolate. Its pathway is cofactor biosynthesis; (R)-pantothenate biosynthesis; (R)-pantoate from 3-methyl-2-oxobutanoate: step 1/2. Its function is as follows. Catalyzes the reversible reaction in which hydroxymethyl group from 5,10-methylenetetrahydrofolate is transferred onto alpha-ketoisovalerate to form ketopantoate. This chain is 3-methyl-2-oxobutanoate hydroxymethyltransferase, found in Bartonella tribocorum (strain CIP 105476 / IBS 506).